Here is a 1153-residue protein sequence, read N- to C-terminus: ATP-dependent helicase/deoxyribonuclease subunit B (1153 aa).

The region spanning 1–289 (MELNAYIGRA…KHLEQNFNAL (289 aa)) is the UvrD-like helicase ATP-binding domain. 8–15 (GRAGTGKS) contributes to the ATP binding site. The UvrD-like helicase C-terminal domain maps to 269 to 583 (LDVQRFIHND…SIGTMDLAKV (315 aa)). [4Fe-4S] cluster-binding residues include Cys-784, Cys-1110, Cys-1113, and Cys-1119.

The protein belongs to the helicase family. AddB/RexB type 1 subfamily. In terms of assembly, heterodimer of AddA and AddB. Requires Mg(2+) as cofactor. The cofactor is [4Fe-4S] cluster.

Functionally, the heterodimer acts as both an ATP-dependent DNA helicase and an ATP-dependent, dual-direction single-stranded exonuclease. Recognizes the chi site generating a DNA molecule suitable for the initiation of homologous recombination. The AddB subunit has 5' -&gt; 3' nuclease activity but not helicase activity. This chain is ATP-dependent helicase/deoxyribonuclease subunit B, found in Staphylococcus saprophyticus subsp. saprophyticus (strain ATCC 15305 / DSM 20229 / NCIMB 8711 / NCTC 7292 / S-41).